The sequence spans 1013 residues: GPI ethanolamine phosphate transferase 3 (1013 aa).

Residues 41–61 (TLYIFLYSALAALQFIAIAFF) traverse the membrane as a helical segment. 5 N-linked (GlcNAc...) asparagine glycosylation sites follow: Asn-184, Asn-205, Asn-336, Asn-399, and Asn-423. The next 3 membrane-spanning stretches (helical) occupy residues 447-467 (YYSI…LITI), 484-504 (VPTI…VFYV), and 515-535 (LWAS…VPIF). An N-linked (GlcNAc...) asparagine glycan is attached at Asn-539. The next 4 membrane-spanning stretches (helical) occupy residues 558–578 (VAAF…FTIW), 582–602 (IVSF…VFLP), 643–663 (IVGG…SLIT), and 682–702 (NYSF…PACI). N-linked (GlcNAc...) asparagine glycosylation is present at Asn-707. A helical membrane pass occupies residues 715 to 735 (AAPIWIGMLMKSILFVNFIYW). N-linked (GlcNAc...) asparagine glycosylation is found at Asn-742, Asn-750, and Asn-755. 7 helical membrane passes run 761–781 (IVVG…PLCI), 802–822 (NAYG…ILLF), 825–845 (PLAQ…LEIF), 868–888 (FFST…GFIL), 899–919 (LGIV…VALL), 943–963 (GMLL…VTNF), and 977–997 (FMFA…ITIA).

It belongs to the PIGG/PIGN/PIGO family. PIGO subfamily.

The protein resides in the endoplasmic reticulum membrane. It functions in the pathway glycolipid biosynthesis; glycosylphosphatidylinositol-anchor biosynthesis. Its function is as follows. Involved in glycosylphosphatidylinositol-anchor biosynthesis. Transfers ethanolamine phosphate to the GPI third mannose which links the GPI-anchor to the C-terminus of the proteins by an amide bond. Involved in cell wall biosynthesis. This chain is GPI ethanolamine phosphate transferase 3 (GPI13), found in Eremothecium gossypii (strain ATCC 10895 / CBS 109.51 / FGSC 9923 / NRRL Y-1056) (Yeast).